Reading from the N-terminus, the 426-residue chain is Histidine--tRNA ligase 1 (426 aa).

The protein belongs to the class-II aminoacyl-tRNA synthetase family. In terms of assembly, homodimer.

It localises to the cytoplasm. It carries out the reaction tRNA(His) + L-histidine + ATP = L-histidyl-tRNA(His) + AMP + diphosphate + H(+). In Bacillus cereus (strain ATCC 14579 / DSM 31 / CCUG 7414 / JCM 2152 / NBRC 15305 / NCIMB 9373 / NCTC 2599 / NRRL B-3711), this protein is Histidine--tRNA ligase 1.